The following is a 66-amino-acid chain: MMVPVRCFTCGNVVGEHWEEFKARTREAEEPEDPEKVLDELGVERHCCRRMLVSHKDLVDIVSPYQ.

Zn(2+) contacts are provided by cysteine 7, cysteine 10, cysteine 47, and cysteine 48.

This sequence belongs to the archaeal Rpo10/eukaryotic RPB10 RNA polymerase subunit family. In terms of assembly, part of the RNA polymerase complex. The cofactor is Zn(2+).

Its subcellular location is the cytoplasm. The enzyme catalyses RNA(n) + a ribonucleoside 5'-triphosphate = RNA(n+1) + diphosphate. Its function is as follows. DNA-dependent RNA polymerase (RNAP) catalyzes the transcription of DNA into RNA using the four ribonucleoside triphosphates as substrates. The polypeptide is DNA-directed RNA polymerase subunit Rpo10 (Haloarcula marismortui (strain ATCC 43049 / DSM 3752 / JCM 8966 / VKM B-1809) (Halobacterium marismortui)).